The following is a 121-amino-acid chain: UPF0344 protein BT9727_1053 (121 aa).

The next 4 membrane-spanning stretches (helical) occupy residues 6-26 (ITAW…YSAG), 38-58 (LMYI…MKTA), 65-85 (WYGL…MVLV), and 92-112 (ATGA…YLGL).

It belongs to the UPF0344 family.

It localises to the cell membrane. The chain is UPF0344 protein BT9727_1053 from Bacillus thuringiensis subsp. konkukian (strain 97-27).